The chain runs to 382 residues: 3-ketosteroid-9-alpha-monooxygenase, oxygenase component (382 aa).

Residues 20-122 (WHCLGLSRTF…TMEKHGQLFV (103 aa)) form the Rieske domain. Cys-61, His-63, Cys-80, and His-83 together coordinate [2Fe-2S] cluster. Fe cation contacts are provided by Asn-169, His-175, His-180, and Asp-298.

In terms of assembly, homotrimer. The two-component system 3-ketosteroid-9-alpha-monooxygenase is composed of an oxygenase component KshA and a reductase component KshB. Requires [2Fe-2S] cluster as cofactor. It depends on Fe cation as a cofactor.

The enzyme catalyses androsta-1,4-diene-3,17-dione + 2 reduced [2Fe-2S]-[ferredoxin] + O2 + 2 H(+) = 9alpha-hydroxyandrosta-1,4-diene-3,17-dione + 2 oxidized [2Fe-2S]-[ferredoxin] + H2O. In terms of biological role, in vitro, catalyzes the introduction of a 9alpha-hydroxyl moiety into the ring B of 3-ketosteroid substrates such as 1,4-androstadiene-3,17-dione (ADD), 4-androstene-3,17-dione (AD), 4-androstene-17beta-ol-3-one (testosterone), 4-pregnene-3,20-dione (progesterone), 23,24-bisnorcholesta-4-ene-22-oate and 23,24-bisnorcholesta-1,4-diene-22-oate. This Rhodococcus rhodochrous protein is 3-ketosteroid-9-alpha-monooxygenase, oxygenase component.